We begin with the raw amino-acid sequence, 254 residues long: Small ribosomal subunit protein uS2 (254 aa).

The protein belongs to the universal ribosomal protein uS2 family.

The sequence is that of Small ribosomal subunit protein uS2 from Borrelia duttonii (strain Ly).